The primary structure comprises 1273 residues: Lysine-specific histone demethylase 2 (1273 aa).

Polar residues predominate over residues 199–230; the sequence is ENFFDANSPSSQQFPSTYPSRSQNPLSSSGDG. Positions 199–237 are disordered; that stretch reads ENFFDANSPSSQQFPSTYPSRSQNPLSSSGDGSTAIHAG. The stretch at 247 to 307 forms a coiled coil; it reads FSNYPYPLDA…LSKSVDNAVL (61 aa). The region spanning 394–490 is the SWIRM domain; sequence AAEAARKCNL…YGCLSFDSSF (97 aa). Residues 509–551, T517, E550, R558, and 572–573 contribute to the FAD site; these read IAVV…ILEA and TQ. Positions 542-1198 are demethylase activity; the sequence is LPPKVIILEA…GKILRYQRLT (657 aa). The tract at residues 571-596 is disordered; that stretch reads ATQINHHTSNSNSISSNSTSLNPKDV. The span at 574 to 590 shows a compositional bias: low complexity; that stretch reads INHHTSNSNSISSNSTS. The stretch at 681–767 forms a coiled coil; it reads SVRISWISQF…NTVDTDFSKD (87 aa). Residues 1115–1195 constitute a DNA-binding region (HMG box); that stretch reads SKPNANPFLL…AYAGKILRYQ (81 aa). FAD contacts are provided by residues D1147 and 1156–1157; that span reads ET. A disordered region spans residues 1215–1273; it reads KCQDEPIPDDEARLFMQAQREEEQRKQTQDDNISKSREASDEEYHDDGSSDSGYNGTRY. The segment covering 1233–1253 has biased composition (basic and acidic residues); that stretch reads QREEEQRKQTQDDNISKSREA. A compositionally biased stretch (polar residues) spans 1264–1273; it reads SDSGYNGTRY.

The protein belongs to the flavin monoamine oxidase family. In terms of assembly, component of the SWM histone demethylase complex composed of at least lsd1, lsd2, phf1 and phf2. Interacts directly with lsd1. The cofactor is FAD.

It localises to the nucleus. Functionally, catalytic component of the SWM histone demethylase complex that specifically demethylates H3K9me2, a specific tag for epigenetic transcriptional activation, thereby acting as a corepressor. Acts by oxidizing the substrate by FAD to generate the corresponding imine that is subsequently hydrolyzed. Has a role in regulating heterochromatin propagation and euchromatic transcription. Also has a gene activating role. The sequence is that of Lysine-specific histone demethylase 2 (lsd2) from Schizosaccharomyces pombe (strain 972 / ATCC 24843) (Fission yeast).